The primary structure comprises 379 residues: tRNA-specific 2-thiouridylase MnmA (379 aa).

ATP is bound by residues 9-16 (GLSGGVDS) and Met-35. The tract at residues 95 to 97 (NPD) is interaction with target base in tRNA. The active-site Nucleophile is Cys-100. A disulfide bridge connects residues Cys-100 and Cys-198. Position 124 (Gly-124) interacts with ATP. The interval 148–150 (KDQ) is interaction with tRNA. The Cysteine persulfide intermediate role is filled by Cys-198. An interaction with tRNA region spans residues 325-326 (RY).

It belongs to the MnmA/TRMU family.

It localises to the cytoplasm. It carries out the reaction S-sulfanyl-L-cysteinyl-[protein] + uridine(34) in tRNA + AH2 + ATP = 2-thiouridine(34) in tRNA + L-cysteinyl-[protein] + A + AMP + diphosphate + H(+). In terms of biological role, catalyzes the 2-thiolation of uridine at the wobble position (U34) of tRNA, leading to the formation of s(2)U34. The chain is tRNA-specific 2-thiouridylase MnmA from Acidovorax sp. (strain JS42).